The following is a 714-amino-acid chain: MCGIFGYCNFLIEKTRGEIIDTLIEGLQALEYKEYDSSGISIQGDELKSLNIYKQTGKISSLKEEIDLYNLNKNLPFISHCGIAHTRRATHGGLRRANCHPHNSDPSNEFVVVHNGVITNFANLKALLVAKGYVFKSDTDTECIPKLYKHIYDTSIELGYNLDFHVLTNLVLKELEGSYGLLCTSSHFPDEVVAARKGSPLVIGVKGKTDMDVNFVEVEYLDQEEDYLKLNTQTKSSGNVLAAAPVKYNTCLRKSPPLRSQYLRNSTTSTFNHGSSTETPAENGLPRPMEFYLSSDCASLARYVSKVVYLEDNDIAHIYDGELHIHCSKIGSEDFSFRTELSKIKKGPYDNFMQKEIYEQCETTKNVMRGRVDAFTNRVVLGGLENWLTELRRAKRIIMIASKASFHSCLAARPIFEELMEVPVNVELALDFVDRNCCIFRNDVCIFVSRSGETTDTINALNYCIKKEAVTIGVVNCSGSSISRFTHCGVHTNTGPEKGIATTKSYTSQYIALVMIALWMSEDLVSKIERRKEIIQALTIVPSQIKEVLELEPLIIELCDKKLKQHDTFLLLGRGYQFASALEGASKMKEISYVHSESILTNELGHRVLAVASDNPPIIAFATKDAFSPKIASCIDQIIERKGNPIIICNKGHKIWEQDKQKGNVVTLEVPQTVDCLQGILNVIPLQLISYWLAIKKDIGVDLPRDSAMSAPDI.

Catalysis depends on C2, which acts as the Nucleophile; for GATase activity. Residues 2–321 (CGIFGYCNFL…DNDIAHIYDG (320 aa)) form the Glutamine amidotransferase type-2 domain. Over residues 266–280 (STTSTFNHGSSTETP) the composition is skewed to polar residues. The interval 266–285 (STTSTFNHGSSTETPAENGL) is disordered. SIS domains are found at residues 387 to 526 (WLTE…DLVS) and 559 to 704 (CDKK…VDLP).

The catalysed reaction is D-fructose 6-phosphate + L-glutamine = D-glucosamine 6-phosphate + L-glutamate. Its pathway is nucleotide-sugar biosynthesis; UDP-N-acetyl-alpha-D-glucosamine biosynthesis; alpha-D-glucosamine 6-phosphate from D-fructose 6-phosphate: step 1/1. In terms of biological role, involved in amino sugar synthesis (formation of chitin, supplies the amino sugars of asparagine-linked oligosaccharides of glycoproteins). The chain is Putative glutamine--fructose-6-phosphate aminotransferase [isomerizing] from Saccharomyces cerevisiae (strain YJM789) (Baker's yeast).